The chain runs to 159 residues: Galactose-specific lectin nattectin (159 aa).

The N-terminal stretch at 1–21 (MASVPHFTVFLFLACALGIGA) is a signal peptide. The propeptide occupies 22–24 (NVT). Intrachain disulfides connect C31–C42, C59–C155, and C132–C147. The 119-residue stretch at 38-156 (HGSRCFTFHR…CKVKRSFLCA (119 aa)) folds into the C-type lectin domain. 4 residues coordinate Ca(2+): Q122, D124, E130, and N143. Positions 122–124 (QPD) match the Galactose-binding motif.

Monomer. Not glycosylated. In terms of tissue distribution, expressed by the venom gland.

It is found in the secreted. Functionally, galactose specific lectin that exhibits hemagglutination activity (minimum hemagluttination concentration = 2.5 ug/well) in a calcium-independent fashion. Has remarkable pro-inflammatory activity, inducing neutrophil mobilization in mice. Plays a crucial role in the innate immune system and chronic manifestations, especially in neutrophil mobilization. In Thalassophryne nattereri (Copper Joe toadfish), this protein is Galactose-specific lectin nattectin.